The following is a 652-amino-acid chain: MSEKIYPVAKPVESHALINKAEYQEWYAESVADPEQFWGKHGKRIDWFKPYTSVKDTSFTGDVSIKWFEDGETNVSYNCIDRHLATNGDQVAIIWEGDDPSLDRKITYRELYEHVCRMANVLKKHGVKKGDRVTIYMPMVPEAAYAMLACARIGAIHSVVFGGFSPEALGGRIVDCQSTFVITCDEGLRGGKPVPLKANVDKAIDIAARGHVMVKNVLVIRRTGSPLSWAPGRDLWHHEEAATVSADCPPEPMKAEDPLFILYTSGSTGKPKGVLHTTGGYLVYASMTHEYVFDYQHGDIYWCTADVGWVTGHSYIVYGPLANCATTLMFEGIPTFPDAGRFWDVIDKHKVNIFYTAPTAIRSLMGAGDDFVKRSSRSSLRLLGSVGEPINPEAWEWYYHTVGDGRCPVVDTWWQTETGGIMITPLPGATDLKPGSATRPFFGIRPELVDAEGKLIEGAADGNLCIADSWPGQARSVYGDHERFIQTYFSTYEGKYFTGDGCRRDADGYYWITGRVDDVLNVSGHRLGTAEVESALVSHHLVSEAAVVGYPHNIKGQGIYCYVTLMAGSEGSEELRQQLVKHVRAEIGPIASPDKIQFAPGLPKTRSGKIMRRILRKIAEDDFGSLGDTSTLADPAVVDDLIANRQNRAEAA.

CoA is bound by residues 189–192 and threonine 311; that span reads RGGK. ATP is bound by residues 387-389, 411-416, aspartate 500, and arginine 515; these read GEP and DTWWQT. CoA is bound at residue serine 523. Position 526 (arginine 526) interacts with ATP. Mg(2+)-binding residues include valine 537, histidine 539, and valine 542. Position 584 (arginine 584) interacts with CoA. Lysine 609 is subject to N6-acetyllysine.

It belongs to the ATP-dependent AMP-binding enzyme family. Mg(2+) is required as a cofactor. Post-translationally, acetylated. Deacetylation by the SIR2-homolog deacetylase activates the enzyme.

The enzyme catalyses acetate + ATP + CoA = acetyl-CoA + AMP + diphosphate. Catalyzes the conversion of acetate into acetyl-CoA (AcCoA), an essential intermediate at the junction of anabolic and catabolic pathways. AcsA undergoes a two-step reaction. In the first half reaction, AcsA combines acetate with ATP to form acetyl-adenylate (AcAMP) intermediate. In the second half reaction, it can then transfer the acetyl group from AcAMP to the sulfhydryl group of CoA, forming the product AcCoA. The sequence is that of Acetyl-coenzyme A synthetase from Rhizobium rhizogenes (Agrobacterium rhizogenes).